The primary structure comprises 338 residues: Aspartate-semialdehyde dehydrogenase (338 aa).

Residues Thr9–Val12 and Arg37–Ser38 contribute to the NADP(+) site. Residue Arg93 participates in phosphate binding. Cys123 (acyl-thioester intermediate) is an active-site residue. Gln150 provides a ligand contact to substrate. Residue Ser153–Gly154 participates in NADP(+) binding. Lys220 is a phosphate binding site. Arg242 is a binding site for substrate. His249 serves as the catalytic Proton acceptor. Residue Asn316 participates in NADP(+) binding.

This sequence belongs to the aspartate-semialdehyde dehydrogenase family. In terms of assembly, homodimer.

It carries out the reaction L-aspartate 4-semialdehyde + phosphate + NADP(+) = 4-phospho-L-aspartate + NADPH + H(+). Its pathway is amino-acid biosynthesis; L-lysine biosynthesis via DAP pathway; (S)-tetrahydrodipicolinate from L-aspartate: step 2/4. It participates in amino-acid biosynthesis; L-methionine biosynthesis via de novo pathway; L-homoserine from L-aspartate: step 2/3. It functions in the pathway amino-acid biosynthesis; L-threonine biosynthesis; L-threonine from L-aspartate: step 2/5. Catalyzes the NADPH-dependent formation of L-aspartate-semialdehyde (L-ASA) by the reductive dephosphorylation of L-aspartyl-4-phosphate. This is Aspartate-semialdehyde dehydrogenase from Streptomyces akiyoshiensis.